Consider the following 814-residue polypeptide: Tax1-binding protein 1 homolog (814 aa).

Phosphoserine occurs at positions 124, 138, and 225. A coiled-coil region spans residues 144 to 623 (TTKAGLLELK…KELTKSLEDQ (480 aa)). The tract at residues 320 to 420 (EEISKLQSCL…ELQLHAVKKD (101 aa)) is oligomerization. Position 619 is a phosphoserine; by IKKA (Ser619). A Phosphoserine modification is found at Ser632. Residue Ser693 is modified to Phosphoserine; by IKKA. Positions 701-733 (SQPARNLSRPDGLEDPEDSREDENVPIPPDPAN) are disordered. UBZ1-type zinc fingers lie at residues 752-778 (HKKCPLCELMFPPNYDQTKFEEHVESH) and 779-805 (WKVCPMCSEQFPPDYDQQGFERHVQTH). Positions 755, 758, 774, 778, 782, 785, 801, and 805 each coordinate Zn(2+).

Homooligomer. Interacts with TNFAIP3. Interacts with STARD13. Interacts with MYO6. Interacts with TOM1; the interaction is indirect and is mediated by MYO6, which acts as a bridge between TOM1 and TAX1BP1. Interacts with MAVS; this interaction induces MAVS polyubiquitination. Interacts with TNIP1. Interacts with TRAF6; this interaction mediates deubiquitination of TRAF6 and inhibition of NF-kappa-B activation. Interacts with RIPK1; this interaction negatively regulates RIPK1 ubiquitination. Interacts with NBR1. Interacts with TBK1. Interacts with RB1CC1. Interacts with SQSTM1. Interacts with AZI2. Interacts with TICAM1 and TRIM32; these interactions target TICAM1 to TAX1BP1-mediated selective autophagic degradation. Phosphorylated in the C-terminal region by CHUK/IKKA leading to NF-kappa-B signaling down-regulation.

The protein resides in the cytoplasm. Its subcellular location is the mitochondrion. It is found in the preautophagosomal structure. The protein localises to the cytoplasmic vesicle. It localises to the autophagosome. Functionally, ubiquitin-binding adapter that participates in inflammatory, antiviral and innate immune processes as well as selective autophagy regulation. Plays a key role in the negative regulation of NF-kappa-B and IRF3 signalings by acting as an adapter for the ubiquitin-editing enzyme A20/TNFAIP3 to bind and inactivate its substrates. Disrupts the interactions between the E3 ubiquitin ligase TRAF3 and TBK1/IKBKE to attenuate 'Lys63'-linked polyubiquitination of TBK1 and thereby IFN-beta production. Also recruits A20/TNFAIP3 to ubiquitinated signaling proteins TRAF6 and RIPK1, leading to their deubiquitination and disruption of IL-1 and TNF-induced NF-kappa-B signaling pathways. Inhibits virus-induced apoptosis by inducing the 'Lys-48'-linked polyubiquitination and degradation of MAVS via recruitment of the E3 ligase ITCH, thereby attenuating MAVS-mediated apoptosis signaling. As a macroautophagy/autophagy receptor, facilitates the xenophagic clearance of pathogenic bacteria such as Salmonella typhimurium and Mycobacterium tuberculosis. Upon NBR1 recruitment to the SQSTM1-ubiquitin condensates, acts as the major recruiter of RB1CC1 to these ubiquitin condensates to promote their autophagic degradation. Mediates the autophagic degradation of other substrates including TICAM1. The sequence is that of Tax1-binding protein 1 homolog (Tax1bp1) from Mus musculus (Mouse).